Consider the following 146-residue polypeptide: MYPAHLLVLLAVCVSLLGAASIPPQPLNLVQFSYLIQCANHGSRATWHYTDYGCYCGSGGSGTPVDELDRCCQTHDNCYGEAEKKGCYPKMSAYDYYCGGDGPYCRNIRKECQRFVCDCDAIAAKCFARAPYNDANWDIDTETRCQ.

A signal peptide spans 1–19 (MYPAHLLVLLAVCVSLLGA). Residues 20–27 (ASIPPQPL) constitute a propeptide that is removed on maturation. Cystine bridges form between Cys-38–Cys-98, Cys-54–Cys-145, Cys-56–Cys-72, Cys-71–Cys-126, Cys-78–Cys-119, Cys-87–Cys-112, and Cys-105–Cys-117. Ca(2+) contacts are provided by Tyr-55, Gly-57, and Gly-59. The active site involves His-75. Residue Asp-76 coordinates Ca(2+). Asp-120 is a catalytic residue.

Belongs to the phospholipase A2 family. Group I subfamily. D49 sub-subfamily. Ca(2+) serves as cofactor. As to expression, expressed by the venom gland.

It is found in the secreted. It carries out the reaction a 1,2-diacyl-sn-glycero-3-phosphocholine + H2O = a 1-acyl-sn-glycero-3-phosphocholine + a fatty acid + H(+). Snake venom phospholipase A2 (PLA2) that inhibits collagen-induced platelet aggregation. PLA2 catalyzes the calcium-dependent hydrolysis of the 2-acyl groups in 3-sn-phosphoglycerides. The protein is Acidic phospholipase A2 S8-51 of Austrelaps superbus (Lowland copperhead snake).